A 422-amino-acid polypeptide reads, in one-letter code: Synaptotagmin-2 (422 aa).

Positions 1 to 43 (MRNIFKRNQEPNVAPATTTATMPLAPVAPADNSTESTGPGESQ) are disordered. Residues 1–60 (MRNIFKRNQEPNVAPATTTATMPLAPVAPADNSTESTGPGESQEDMFAKLKEKFFNEINK) lie on the Vesicular side of the membrane. Low complexity predominate over residues 14-30 (APATTTATMPLAPVAPA). The segment covering 31-40 (DNSTESTGPG) has biased composition (polar residues). Asn-32 is a glycosylation site (N-linked (GlcNAc...) asparagine). A helical transmembrane segment spans residues 61–87 (IPLPPWALIAMAVVAGLLLLTCCFCIC). Over 88–422 (KKCCCKKKKN…EVDALLGKNK (335 aa)) the chain is Cytoplasmic. Residues 102-141 (GKGMKNAMNMKDMKGGQDDDDAETGLTEGEGEGEEEKEPE) form a disordered region. Acidic residues predominate over residues 119 to 139 (DDDDAETGLTEGEGEGEEEKE). 2 positions are modified to phosphothreonine: Thr-125 and Thr-128. The interval 136–382 (EEKEPENLGK…AIGKIFVGSN (247 aa)) is phospholipid binding. C2 domains lie at 142–261 (NLGK…EEWR) and 273–406 (KLGD…AQWH). The Ca(2+) site is built by Leu-172, Asp-173, and Asp-179. Position 202 is a phosphothreonine (Thr-202). Tyr-230 bears the Phosphotyrosine mark. Ca(2+) is bound by residues Asp-231, Phe-232, Asp-233, Ser-236, Lys-237, Asp-239, Asp-304, Asp-310, Asp-364, and Asp-366. The residue at position 386 (Thr-386) is a Phosphothreonine.

The protein belongs to the synaptotagmin family. As to quaternary structure, homotetramer. Heterodimer; heterodimerizes with SYT1 in presence of calcium. Interacts with SCAMP5. Interacts with STON2. Interacts with PRRT2. In terms of assembly, (Microbial infection) Interacts with C.botulinum neurotoxin type B (BoNT/B, botB). (Microbial infection) Interacts with C.botulinum neurotoxin type G (BoNT/G, botG). The cofactor is Ca(2+). In terms of processing, phosphorylation at Thr-202 by WNK1, changes the calcium requirement for SYT2-binding to phospholipid membranes.

The protein localises to the cytoplasmic vesicle. Its subcellular location is the secretory vesicle. It localises to the synaptic vesicle membrane. It is found in the chromaffin granule membrane. The protein resides in the cytoplasm. Functionally, exhibits calcium-dependent phospholipid and inositol polyphosphate binding properties. May have a regulatory role in the membrane interactions during trafficking of synaptic vesicles at the active zone of the synapse. Plays a role in dendrite formation by melanocytes. In terms of biological role, (Microbial infection) Receptor for C.botulinum neurotoxin type B (BoNT/B, botB); interaction is improved in the presence of gangliosides. The toxin binds via the vesicular domain (residues 47-60). Its function is as follows. (Microbial infection) Receptor for C.botulinum neurotoxin type G (BoNT/G, botG); gangliosides are not required for (or only very slightly improve) binding to a membrane-anchored receptor fragment. The toxin binds via the vesicular domain (residues 47-55). This Mus musculus (Mouse) protein is Synaptotagmin-2.